The chain runs to 2873 residues: WD repeat-containing protein 87 (2873 aa).

WD repeat units follow at residues 108 to 146 (PCRFNISCLCYDPEMKMLLSGILGAVVTWVIELGGTGLQ), 199 to 239 (TSSG…PLHS), 242 to 283 (AHQS…RRLE), 368 to 407 (SILDQAVDWAYDPGKEELFVATGSSEVLVFDTTRCPCPAK), 415 to 460 (NSQD…RLEK), 516 to 553 (LSSCHLTHLILLPKSVGAITETNCLRLWKFHDFLSSGS), and 565 to 604 (LHLCAITSFDVCLSLSLFVTGSADGSVRIWDFHGRLIGIL). 5 disordered regions span residues 1049-1124 (FSLD…ESGT), 1177-1199 (DKRDKKATAQKLKKKHKKKGKEA), 1392-1413 (EKKTFQKSPKQGRKAVQKERKV), 1531-1607 (SKSK…QEER), and 2199-2338 (KRKE…EEVD). 2 stretches are compositionally biased toward basic residues: residues 1089–1101 (VKKHSQKWLRGLK) and 1187–1197 (KLKKKHKKKGK). Positions 1549 to 1574 (EVSREGEEKEQQVTEEQRHIQEEHKW) are enriched in basic and acidic residues. Basic residues predominate over residues 1575-1586 (ARIHRKRARAEK). Composition is skewed to basic and acidic residues over residues 1587–1607 (KRAQEERKLAQEEEKLAQEER) and 2204–2213 (KRGDKPKEKF). The span at 2244–2276 (SSEEEEEREEEEEREEEEEREEEEERKEEEEGE) shows a compositional bias: acidic residues. Positions 2277 to 2287 (EKQVEKEEEEK) are enriched in basic and acidic residues. A compositionally biased stretch (acidic residues) spans 2304-2337 (EVFEEKEEIMSEEETESLSDEEEEEESCSLEEEV).

In Homo sapiens (Human), this protein is WD repeat-containing protein 87 (WDR87).